Consider the following 320-residue polypeptide: Nodulation efficiency protein NfeD (320 aa).

The protein belongs to the ornithine cyclodeaminase/mu-crystallin family.

Seems to be involved in the nodulation efficiency of R.meliloti GR4 on alfalfa roots. The polypeptide is Nodulation efficiency protein NfeD (Rhizobium meliloti (Ensifer meliloti)).